The chain runs to 78 residues: Exodeoxyribonuclease 7 small subunit (78 aa).

The protein belongs to the XseB family. As to quaternary structure, heterooligomer composed of large and small subunits.

The protein localises to the cytoplasm. It catalyses the reaction Exonucleolytic cleavage in either 5'- to 3'- or 3'- to 5'-direction to yield nucleoside 5'-phosphates.. Bidirectionally degrades single-stranded DNA into large acid-insoluble oligonucleotides, which are then degraded further into small acid-soluble oligonucleotides. The chain is Exodeoxyribonuclease 7 small subunit from Synechococcus sp. (strain JA-2-3B'a(2-13)) (Cyanobacteria bacterium Yellowstone B-Prime).